Consider the following 527-residue polypeptide: MMTPIGIRIRKQIPLSYHYSSIQALLSRFTPTPYNPISNSSSSTQTIPTQFHESQCTNPISRPTVFLFDPPPIRFTHTKSFSTDPSSLDFPSNQPPVVSTISSHHNISQPIDAGSSIRKPISLWPGMFNSPVTNALWEARSNMFEKYGEPTADPPSQSELVTKSPAQSRTSILYNLSSDYALREHYRNPWNMIRIGKLLEDLDALAGTIAFKHCTNEDGMSRPLLLVTASVDKMVLKKPISIDTDLSIVGAVTWVGRSSMEIQLQVLQTTHESSDPSDSVSLVANFTFVARDSKTGKSAVINQISPETGEEKLLWREADERNKMRKMKRKIQKDLELEKQYIERLNALLAEGRVFCDLPALADRNSILMKDTCLENSFICQPQQRNIYGRIFGGFLMRRAVELAFSTTYSFAGVVTHFLEVDHVDFLRPVDVGDFLRLKSCVLYTELQNPTEPLINVEVVAHVTRPELRSSEVSNKFYFTFSVGPEAVKDGLLVRNVVPATEEEARRVLERMDAETPHPHSQYENEI.

The N-terminal 75 residues, 1-75, are a transit peptide targeting the mitochondrion; that stretch reads MMTPIGIRIR…FLFDPPPIRF (75 aa). 2 consecutive HotDog ACOT-type domains span residues 172-294 and 370-487; these read ILYN…RDSK and KDTC…GPEA.

The protein belongs to the acyl coenzyme A hydrolase family. Mostly expressed at low levels in glandular trichomes (lupulin glands), and, to a lower extent, in stems, leaves, flowers and cones.

It localises to the mitochondrion. The enzyme catalyses 2-methylpropanoyl-CoA + H2O = 2-methylpropanoate + CoA + H(+). It carries out the reaction propanoyl-CoA + H2O = propanoate + CoA + H(+). The catalysed reaction is octanoyl-CoA + H2O = octanoate + CoA + H(+). It catalyses the reaction butanoyl-CoA + H2O = butanoate + CoA + H(+). The enzyme catalyses 3-methylbutanoyl-CoA + H2O = 3-methylbutanoate + CoA + H(+). It carries out the reaction 2-methylbutanoyl-CoA + H2O = 2-methylbutanoate + CoA + H(+). Functionally, acyl-CoA thioesterases are a group of enzymes that catalyze the hydrolysis of acyl-CoAs to the free fatty acid and coenzyme A (CoASH), providing the potential to regulate intracellular levels of acyl-CoAs, free fatty acids and CoASH. Active on acyl CoAs with short chains (propanoyl-CoA and butanoyl-CoA), branched short chains (2-methylpropanoyl-CoA, 2-methylbutanoyl-CoA and 3-methylbutanoyl-CoA) and medium chains (octanoyl-CoA). This is Acyl-coenzyme A thioesterase 4, mitochondrial from Humulus lupulus (European hop).